The primary structure comprises 1343 residues: DNA-directed RNA polymerase subunit beta (1343 aa).

This sequence belongs to the RNA polymerase beta chain family. As to quaternary structure, the RNAP catalytic core consists of 2 alpha, 1 beta, 1 beta' and 1 omega subunit. When a sigma factor is associated with the core the holoenzyme is formed, which can initiate transcription.

It catalyses the reaction RNA(n) + a ribonucleoside 5'-triphosphate = RNA(n+1) + diphosphate. In terms of biological role, DNA-dependent RNA polymerase catalyzes the transcription of DNA into RNA using the four ribonucleoside triphosphates as substrates. In Shewanella denitrificans (strain OS217 / ATCC BAA-1090 / DSM 15013), this protein is DNA-directed RNA polymerase subunit beta.